The chain runs to 256 residues: 5-keto-4-deoxy-D-glucarate aldolase (256 aa).

His-50 functions as the Proton acceptor in the catalytic mechanism. Gln-151 serves as a coordination point for substrate. Residue Glu-153 participates in Mg(2+) binding. Substrate is bound by residues Ser-178 and Asp-179. Asp-179 contributes to the Mg(2+) binding site.

It belongs to the HpcH/HpaI aldolase family. KDGluc aldolase subfamily. As to quaternary structure, homohexamer; trimer of dimers. Requires Mg(2+) as cofactor.

The enzyme catalyses 5-dehydro-4-deoxy-D-glucarate = 2-hydroxy-3-oxopropanoate + pyruvate. It catalyses the reaction 2-dehydro-3-deoxy-D-glucarate = 2-hydroxy-3-oxopropanoate + pyruvate. The protein operates within carbohydrate acid metabolism; galactarate degradation; D-glycerate from galactarate: step 2/3. Catalyzes the reversible retro-aldol cleavage of both 5-keto-4-deoxy-D-glucarate and 2-keto-3-deoxy-D-glucarate to pyruvate and tartronic semialdehyde. In Salmonella paratyphi A (strain ATCC 9150 / SARB42), this protein is 5-keto-4-deoxy-D-glucarate aldolase.